The chain runs to 571 residues: Serine/threonine-protein kinase Nek7 (571 aa).

Residues tyrosine 19–leucine 277 form the Protein kinase domain. Residues valine 25–aspartate 33 and lysine 48 contribute to the ATP site. Aspartate 144 functions as the Proton acceptor in the catalytic mechanism. Disordered regions lie at residues serine 298–lysine 321 and threonine 338–arginine 363. Residues phenylalanine 312–lysine 321 are compositionally biased toward basic and acidic residues. Positions serine 342–serine 351 are enriched in low complexity.

Belongs to the protein kinase superfamily. NEK Ser/Thr protein kinase family. NIMA subfamily.

It carries out the reaction L-seryl-[protein] + ATP = O-phospho-L-seryl-[protein] + ADP + H(+). The catalysed reaction is L-threonyl-[protein] + ATP = O-phospho-L-threonyl-[protein] + ADP + H(+). May be involved in plant development processes. The chain is Serine/threonine-protein kinase Nek7 (NEK7) from Arabidopsis thaliana (Mouse-ear cress).